We begin with the raw amino-acid sequence, 204 residues long: MERVWNPAAGIDGLKRSETYLVDPHDFVGVLTLSPYTVFERGLFVRMSGMRLLALLAAPKPQEPQPAVRRFPQRSRRNVCLKACADGAQSLAKVLAARVSMPPCMSKTMADLSSAPRGNMYRKRFEFNCYLANVITCTKCKTACLIGALLHFYRMDAKCVGEVTHLLIKAQDVYKPSNCAKMKKVTKLCPQASMCKGLNPICNF.

Belongs to the baculoviridae LEF-2 family.

Required for late and very late gene expression. Specifically required for expression from the vp39 and polh promoters. This is Late expression factor 2 (LEF-2) from Orgyia pseudotsugata (Douglas-fir tussock moth).